Reading from the N-terminus, the 184-residue chain is Ribosome-recycling factor (184 aa).

Residues 141 to 164 form a disordered region; it reads DEKNGDITEDDLRSQTEDVQKATD.

It belongs to the RRF family.

Its subcellular location is the cytoplasm. Functionally, responsible for the release of ribosomes from messenger RNA at the termination of protein biosynthesis. May increase the efficiency of translation by recycling ribosomes from one round of translation to another. In Staphylococcus haemolyticus (strain JCSC1435), this protein is Ribosome-recycling factor.